We begin with the raw amino-acid sequence, 264 residues long: tRNA pseudouridine synthase A (264 aa).

Catalysis depends on Asp-51, which acts as the Nucleophile. Position 109 (Tyr-109) interacts with substrate.

The protein belongs to the tRNA pseudouridine synthase TruA family. In terms of assembly, homodimer.

The enzyme catalyses uridine(38/39/40) in tRNA = pseudouridine(38/39/40) in tRNA. In terms of biological role, formation of pseudouridine at positions 38, 39 and 40 in the anticodon stem and loop of transfer RNAs. This Polaromonas naphthalenivorans (strain CJ2) protein is tRNA pseudouridine synthase A.